We begin with the raw amino-acid sequence, 907 residues long: Protein translocase subunit SecA (907 aa).

ATP is bound by residues Q87, 105-109 (GEGKT), and D512. Zn(2+) contacts are provided by C891, C893, C902, and H903.

This sequence belongs to the SecA family. As to quaternary structure, monomer and homodimer. Part of the essential Sec protein translocation apparatus which comprises SecA, SecYEG and auxiliary proteins SecDF-YajC and YidC. The cofactor is Zn(2+).

Its subcellular location is the cell inner membrane. It localises to the cytoplasm. The catalysed reaction is ATP + H2O + cellular proteinSide 1 = ADP + phosphate + cellular proteinSide 2.. Functionally, part of the Sec protein translocase complex. Interacts with the SecYEG preprotein conducting channel. Has a central role in coupling the hydrolysis of ATP to the transfer of proteins into and across the cell membrane, serving both as a receptor for the preprotein-SecB complex and as an ATP-driven molecular motor driving the stepwise translocation of polypeptide chains across the membrane. In Tolumonas auensis (strain DSM 9187 / NBRC 110442 / TA 4), this protein is Protein translocase subunit SecA.